The primary structure comprises 180 residues: Large ribosomal subunit protein uL6 (180 aa).

The protein belongs to the universal ribosomal protein uL6 family. Part of the 50S ribosomal subunit.

In terms of biological role, this protein binds to the 23S rRNA, and is important in its secondary structure. It is located near the subunit interface in the base of the L7/L12 stalk, and near the tRNA binding site of the peptidyltransferase center. This Clostridium botulinum (strain Loch Maree / Type A3) protein is Large ribosomal subunit protein uL6.